A 190-amino-acid polypeptide reads, in one-letter code: MPRFISFEGIDGAGKTTLAKKVYEVLKKKGYNVILTQEPFTREITELIKKAGWNDPVLLTLLFSADRAFHIKWIMEQKPEIVLMDRYFHSTIAYQSVLGLDEKWIEEVNSKFPKPDIVFLLDIKVNEAIKRIRKDDQFNFEEKIATLEAVRKKYLELARKYNFIVLDAMSKIEELTEKTVQIICSLVKCS.

Position 9-16 (9-16) interacts with ATP; it reads GIDGAGKT.

It belongs to the thymidylate kinase family.

The enzyme catalyses dTMP + ATP = dTDP + ADP. In Sulfurisphaera tokodaii (strain DSM 16993 / JCM 10545 / NBRC 100140 / 7) (Sulfolobus tokodaii), this protein is Probable thymidylate kinase (tmk1).